Here is a 66-residue protein sequence, read N- to C-terminus: Large ribosomal subunit protein eL24 (66 aa).

4 residues coordinate Zn(2+): Cys6, Cys9, Cys32, and Cys36. The segment at 6-36 adopts a C4-type zinc-finger fold; sequence CSFCGKTIEPGTGIMYVRKDGAILYFCSNKC.

The protein belongs to the eukaryotic ribosomal protein eL24 family. In terms of assembly, part of the 50S ribosomal subunit. Forms a cluster with proteins L3 and L14. It depends on Zn(2+) as a cofactor.

Functionally, binds to the 23S rRNA. The sequence is that of Large ribosomal subunit protein eL24 from Thermoplasma volcanium (strain ATCC 51530 / DSM 4299 / JCM 9571 / NBRC 15438 / GSS1).